The sequence spans 87 residues: MKNFETLFAELSEKAATRPAGSRTVAELDSGIHGIGKKVVEEAAEVWMAAEYESDEAAAEEISQLLYHLQVLMLAKGLSLEDVYKHL.

This sequence belongs to the PRA-PH family.

Its subcellular location is the cytoplasm. It carries out the reaction 1-(5-phospho-beta-D-ribosyl)-ATP + H2O = 1-(5-phospho-beta-D-ribosyl)-5'-AMP + diphosphate + H(+). Its pathway is amino-acid biosynthesis; L-histidine biosynthesis; L-histidine from 5-phospho-alpha-D-ribose 1-diphosphate: step 2/9. The protein is Phosphoribosyl-ATP pyrophosphatase of Paenarthrobacter aurescens (strain TC1).